Reading from the N-terminus, the 339-residue chain is NADH-quinone oxidoreductase subunit H (339 aa).

9 helical membrane passes run 10 to 30 (FPLIIIALKVVAITVPLILCV), 50 to 70 (PNVVGPFGLLQPIADAVKLLF), 82 to 102 (ILFILAPMITFILSLIGWAVV), 115 to 135 (VGVLYILAISSLSVYGIIIAG), 161 to 181 (MGLVIITVLLTTGTLNLSGII), 187 to 207 (IPWWIDLMLLPMGVVFFISVL), 235 to 255 (MGFALFFLGEYANMILVSAMT), 275 to 295 (IPGFFWFAFKVGFLLFCFLWI), and 310 to 330 (LGWKVLLPLTLFWVVLVSSVL).

The protein belongs to the complex I subunit 1 family. NDH-1 is composed of 14 different subunits. Subunits NuoA, H, J, K, L, M, N constitute the membrane sector of the complex.

It is found in the cell inner membrane. The catalysed reaction is a quinone + NADH + 5 H(+)(in) = a quinol + NAD(+) + 4 H(+)(out). Functionally, NDH-1 shuttles electrons from NADH, via FMN and iron-sulfur (Fe-S) centers, to quinones in the respiratory chain. The immediate electron acceptor for the enzyme in this species is believed to be ubiquinone. Couples the redox reaction to proton translocation (for every two electrons transferred, four hydrogen ions are translocated across the cytoplasmic membrane), and thus conserves the redox energy in a proton gradient. This subunit may bind ubiquinone. This is NADH-quinone oxidoreductase subunit H from Rickettsia canadensis (strain McKiel).